Here is a 637-residue protein sequence, read N- to C-terminus: 1-deoxy-D-xylulose-5-phosphate synthase (637 aa).

Thiamine diphosphate is bound by residues His71 and 112–114; that span reads SHA. Asp144 contributes to the Mg(2+) binding site. Thiamine diphosphate-binding positions include 145-146, Asn173, Tyr284, and Glu365; that span reads GA. Asn173 contacts Mg(2+).

This sequence belongs to the transketolase family. DXPS subfamily. As to quaternary structure, homodimer. The cofactor is Mg(2+). Thiamine diphosphate is required as a cofactor.

It carries out the reaction D-glyceraldehyde 3-phosphate + pyruvate + H(+) = 1-deoxy-D-xylulose 5-phosphate + CO2. Its pathway is metabolic intermediate biosynthesis; 1-deoxy-D-xylulose 5-phosphate biosynthesis; 1-deoxy-D-xylulose 5-phosphate from D-glyceraldehyde 3-phosphate and pyruvate: step 1/1. Its function is as follows. Catalyzes the acyloin condensation reaction between C atoms 2 and 3 of pyruvate and glyceraldehyde 3-phosphate to yield 1-deoxy-D-xylulose-5-phosphate (DXP). The protein is 1-deoxy-D-xylulose-5-phosphate synthase of Mycolicibacterium gilvum (strain PYR-GCK) (Mycobacterium gilvum (strain PYR-GCK)).